We begin with the raw amino-acid sequence, 269 residues long: E3 ubiquitin-protein ligase complex slx8-rfp subunit slx8 (269 aa).

The segment covering 1-10 (MPPAHKRDTN) has biased composition (basic and acidic residues). Disordered regions lie at residues 1-75 (MPPA…LNRA) and 166-196 (PRKQ…QVVP). Polar residues predominate over residues 60-70 (PSGTTSENESL). Residues 206 to 247 (CVICLDSPENLSCTPCGHIFCNFCILSALGTTAATQKCPVCR) form an RING-type zinc finger.

Part of an E3 ubiquitin complex including rfp1, rfp2 and slx8. Interacts with rfp1 and rfp2.

It is found in the nucleus. The catalysed reaction is S-ubiquitinyl-[E2 ubiquitin-conjugating enzyme]-L-cysteine + [acceptor protein]-L-lysine = [E2 ubiquitin-conjugating enzyme]-L-cysteine + N(6)-ubiquitinyl-[acceptor protein]-L-lysine.. It participates in protein modification; protein ubiquitination. Mediates ubiquitination and subsequent desumoylation/degradation of sumoylated proteins and proteins containing SUMO-like domains. Acts as a critical suppressor of gross chromosomal rearrangements (GCRs) during normal cell cycle progression. Involved in stabilizing, restarting or resolving transiently stalled replication forks. Prevents accumulation of DNA damage during cell cycle progression. In Schizosaccharomyces pombe (strain 972 / ATCC 24843) (Fission yeast), this protein is E3 ubiquitin-protein ligase complex slx8-rfp subunit slx8 (slx8).